The primary structure comprises 506 residues: ATP synthase subunit alpha, chloroplastic (506 aa).

170–177 (GDRQTGKT) is an ATP binding site.

This sequence belongs to the ATPase alpha/beta chains family. F-type ATPases have 2 components, CF(1) - the catalytic core - and CF(0) - the membrane proton channel. CF(1) has five subunits: alpha(3), beta(3), gamma(1), delta(1), epsilon(1). CF(0) has four main subunits: a, b, b' and c.

Its subcellular location is the plastid. The protein resides in the chloroplast thylakoid membrane. The catalysed reaction is ATP + H2O + 4 H(+)(in) = ADP + phosphate + 5 H(+)(out). In terms of biological role, produces ATP from ADP in the presence of a proton gradient across the membrane. The alpha chain is a regulatory subunit. The polypeptide is ATP synthase subunit alpha, chloroplastic (Chlorokybus atmophyticus (Soil alga)).